A 297-amino-acid polypeptide reads, in one-letter code: Pyridoxal 5'-phosphate synthase subunit PdxS (297 aa).

D27 is a D-ribose 5-phosphate binding site. K84 serves as the catalytic Schiff-base intermediate with D-ribose 5-phosphate. G156 is a binding site for D-ribose 5-phosphate. R168 is a binding site for D-glyceraldehyde 3-phosphate. Residues G217 and 238 to 239 (GS) each bind D-ribose 5-phosphate.

This sequence belongs to the PdxS/SNZ family. In terms of assembly, in the presence of PdxT, forms a dodecamer of heterodimers.

The enzyme catalyses aldehydo-D-ribose 5-phosphate + D-glyceraldehyde 3-phosphate + L-glutamine = pyridoxal 5'-phosphate + L-glutamate + phosphate + 3 H2O + H(+). It participates in cofactor biosynthesis; pyridoxal 5'-phosphate biosynthesis. Its function is as follows. Catalyzes the formation of pyridoxal 5'-phosphate from ribose 5-phosphate (RBP), glyceraldehyde 3-phosphate (G3P) and ammonia. The ammonia is provided by the PdxT subunit. Can also use ribulose 5-phosphate and dihydroxyacetone phosphate as substrates, resulting from enzyme-catalyzed isomerization of RBP and G3P, respectively. This Corynebacterium efficiens (strain DSM 44549 / YS-314 / AJ 12310 / JCM 11189 / NBRC 100395) protein is Pyridoxal 5'-phosphate synthase subunit PdxS.